A 223-amino-acid chain; its full sequence is DNA mismatch repair protein MutH (223 aa).

The protein belongs to the MutH family.

It localises to the cytoplasm. Its function is as follows. Sequence-specific endonuclease that cleaves unmethylated GATC sequences. It is involved in DNA mismatch repair. The protein is DNA mismatch repair protein MutH of Haemophilus influenzae (strain 86-028NP).